A 107-amino-acid polypeptide reads, in one-letter code: Phosphoribosyl-ATP pyrophosphatase (107 aa).

This sequence belongs to the PRA-PH family.

The protein resides in the cytoplasm. The enzyme catalyses 1-(5-phospho-beta-D-ribosyl)-ATP + H2O = 1-(5-phospho-beta-D-ribosyl)-5'-AMP + diphosphate + H(+). The protein operates within amino-acid biosynthesis; L-histidine biosynthesis; L-histidine from 5-phospho-alpha-D-ribose 1-diphosphate: step 2/9. This is Phosphoribosyl-ATP pyrophosphatase from Zymomonas mobilis subsp. mobilis (strain ATCC 31821 / ZM4 / CP4).